The chain runs to 193 residues: Ribosome maturation factor RimM (193 aa).

The PRC barrel domain maps to 97–172 (DDEFYLTDLV…LILADPPALV (76 aa)). Residues 168-193 (PPALVGDHEGPEEKGLDENEELGDRD) form a disordered region. Over residues 173–193 (GDHEGPEEKGLDENEELGDRD) the composition is skewed to basic and acidic residues.

The protein belongs to the RimM family. In terms of assembly, binds ribosomal protein uS19.

The protein localises to the cytoplasm. Functionally, an accessory protein needed during the final step in the assembly of 30S ribosomal subunit, possibly for assembly of the head region. Essential for efficient processing of 16S rRNA. May be needed both before and after RbfA during the maturation of 16S rRNA. It has affinity for free ribosomal 30S subunits but not for 70S ribosomes. The protein is Ribosome maturation factor RimM of Caulobacter vibrioides (strain ATCC 19089 / CIP 103742 / CB 15) (Caulobacter crescentus).